The primary structure comprises 184 residues: MTDLVVTGRGSAPVADLISSLTRDVADFPKPGIQFKDLTPLFADREAMAAVIDALADIAAGTDLVAGIESRGSLVAAALAARLGTGVLSIRKSGKLPPPVLTEEYDREYGAASMEIPADSLELRGRSVMIIDDVLATGGTLGAATRLLKRTGARVTGAAVVVELTALRGREAIAPLRVHSLSRA.

Belongs to the purine/pyrimidine phosphoribosyltransferase family. In terms of assembly, homodimer.

It localises to the cytoplasm. It carries out the reaction AMP + diphosphate = 5-phospho-alpha-D-ribose 1-diphosphate + adenine. It participates in purine metabolism; AMP biosynthesis via salvage pathway; AMP from adenine: step 1/1. Its function is as follows. Catalyzes a salvage reaction resulting in the formation of AMP, that is energically less costly than de novo synthesis. The protein is Adenine phosphoribosyltransferase of Mycobacterium marinum (strain ATCC BAA-535 / M).